Consider the following 644-residue polypeptide: DNA gyrase subunit B (644 aa).

Residues 429 to 543 (CEIFLVEGDS…AGYVYIAQPP (115 aa)) enclose the Toprim domain. Residues glutamate 435, aspartate 508, and aspartate 510 each coordinate Mg(2+).

It belongs to the type II topoisomerase GyrB family. As to quaternary structure, heterotetramer, composed of two GyrA and two GyrB chains. In the heterotetramer, GyrA contains the active site tyrosine that forms a transient covalent intermediate with DNA, while GyrB binds cofactors and catalyzes ATP hydrolysis. Requires Mg(2+) as cofactor. The cofactor is Mn(2+). Ca(2+) serves as cofactor.

The protein localises to the cytoplasm. It carries out the reaction ATP-dependent breakage, passage and rejoining of double-stranded DNA.. Its function is as follows. A type II topoisomerase that negatively supercoils closed circular double-stranded (ds) DNA in an ATP-dependent manner to modulate DNA topology and maintain chromosomes in an underwound state. Negative supercoiling favors strand separation, and DNA replication, transcription, recombination and repair, all of which involve strand separation. Also able to catalyze the interconversion of other topological isomers of dsDNA rings, including catenanes and knotted rings. Type II topoisomerases break and join 2 DNA strands simultaneously in an ATP-dependent manner. This chain is DNA gyrase subunit B, found in Staphylococcus aureus (strain Mu50 / ATCC 700699).